The following is a 350-amino-acid chain: Carbamoyl dehydratase HypE (350 aa).

Residue C350 is modified to S-carbamoylcysteine. Residue C350 is modified to S-cyanocysteine.

Belongs to the HypE family. In terms of processing, modified by HypF, which adds a carboxamido group to the thiolate of the C-terminal cysteine, yielding a protein-S-carboxamide. The carboxamido group is then dehydrated by HypE itself to yield a protein-thiocyanate.

The catalysed reaction is C-terminal S-carboxamide-L-cysteinyl-[HypE protein] + ATP = C-terminal S-cyanate-L-cysteinyl-[HypE protein] + ADP + phosphate + H(+). It participates in protein modification; [NiFe] hydrogenase maturation. Its function is as follows. Involved in the maturation of [NiFe] hydrogenases. Along with HypF, it catalyzes the synthesis of the CN ligands of the active site iron of [NiFe]-hydrogenases. HypE catalyzes the ATP-dependent dehydration of the carboxamido group attached to its C-terminal cysteine to a cyano group. The sequence is that of Carbamoyl dehydratase HypE from Rhizobium leguminosarum bv. viciae.